Here is a 288-residue protein sequence, read N- to C-terminus: Quinate/shikimate dehydrogenase (288 aa).

Residues K71 and D107 each coordinate substrate. Residues 132-135 (AGGA), 155-158 (NRRD), K205, 232-235 (CVYN), and G255 contribute to the NAD(+) site.

Belongs to the shikimate dehydrogenase family. As to quaternary structure, homodimer.

The enzyme catalyses L-quinate + NAD(+) = 3-dehydroquinate + NADH + H(+). It catalyses the reaction L-quinate + NADP(+) = 3-dehydroquinate + NADPH + H(+). It carries out the reaction shikimate + NADP(+) = 3-dehydroshikimate + NADPH + H(+). The catalysed reaction is shikimate + NAD(+) = 3-dehydroshikimate + NADH + H(+). The protein operates within metabolic intermediate biosynthesis; chorismate biosynthesis; chorismate from D-erythrose 4-phosphate and phosphoenolpyruvate: step 4/7. In terms of biological role, the actual biological function of YdiB remains unclear, nor is it known whether 3-dehydroshikimate or quinate represents the natural substrate. Catalyzes the reversible NAD-dependent reduction of both 3-dehydroshikimate (DHSA) and 3-dehydroquinate to yield shikimate (SA) and quinate, respectively. It can use both NAD or NADP for catalysis, however it has higher catalytic efficiency with NAD. The chain is Quinate/shikimate dehydrogenase from Escherichia coli O7:K1 (strain IAI39 / ExPEC).